A 136-amino-acid chain; its full sequence is Globin CTP-III (136 aa).

A Globin domain is found at 1–136; the sequence is LSADQISTVQ…TFFGMIFSKM (136 aa). Heme b is bound at residue His-87.

This sequence belongs to the globin family. In terms of assembly, monomer.

In Chironomus thummi piger (Midge), this protein is Globin CTP-III.